Reading from the N-terminus, the 492-residue chain is Probable proline dehydrogenase, mitochondrial (492 aa).

This sequence belongs to the proline oxidase family. FAD serves as cofactor.

The protein resides in the mitochondrion. The catalysed reaction is L-proline + a quinone = (S)-1-pyrroline-5-carboxylate + a quinol + H(+). Its function is as follows. Converts proline to delta-1-pyrroline-5-carboxylate. The sequence is that of Probable proline dehydrogenase, mitochondrial from Schizosaccharomyces pombe (strain 972 / ATCC 24843) (Fission yeast).